A 238-amino-acid polypeptide reads, in one-letter code: Large ribosomal subunit protein uL1 (238 aa).

Belongs to the universal ribosomal protein uL1 family. In terms of assembly, part of the 50S ribosomal subunit.

Its function is as follows. Binds directly to 23S rRNA. The L1 stalk is quite mobile in the ribosome, and is involved in E site tRNA release. In terms of biological role, protein L1 is also a translational repressor protein, it controls the translation of the L11 operon by binding to its mRNA. The polypeptide is Large ribosomal subunit protein uL1 (Salinispora arenicola (strain CNS-205)).